Here is a 324-residue protein sequence, read N- to C-terminus: Putative glycosyltransferase R655 (324 aa).

Belongs to the glycosyltransferase 25 family.

This is Putative glycosyltransferase R655 from Acanthamoeba polyphaga (Amoeba).